Reading from the N-terminus, the 591-residue chain is L-fucose isomerase (591 aa).

Catalysis depends on proton acceptor residues glutamate 337 and aspartate 361. Mn(2+) is bound by residues glutamate 337, aspartate 361, and histidine 528.

Belongs to the L-fucose isomerase family. As to quaternary structure, homohexamer. Requires Mn(2+) as cofactor.

It localises to the cytoplasm. The enzyme catalyses L-fucose = L-fuculose. The catalysed reaction is D-arabinose = D-ribulose. It carries out the reaction L-xylopyranose = L-xylulose. Its pathway is carbohydrate degradation; L-fucose degradation; L-lactaldehyde and glycerone phosphate from L-fucose: step 1/3. With respect to regulation, inhibited by ribitol, L-arabitol and dulcitol. Isomerization of L-xylulose to L-xylose is inhibited by xylitol. Its function is as follows. Converts the aldose L-fucose into the corresponding ketose L-fuculose. Also converts D-arabinose into D-ribulose. In addition, catalyzes the isomerization of L-xylulose to L-xylose. This chain is L-fucose isomerase, found in Escherichia coli (strain K12).